Consider the following 310-residue polypeptide: Ribosomal RNA small subunit methyltransferase H (310 aa).

Residues 32–34 (AGH), aspartate 51, phenylalanine 78, aspartate 99, and glutamine 106 each bind S-adenosyl-L-methionine. The disordered stretch occupies residues 290–310 (GELEDNRRSRSAKLRVAEKQK).

It belongs to the methyltransferase superfamily. RsmH family.

The protein localises to the cytoplasm. It catalyses the reaction cytidine(1402) in 16S rRNA + S-adenosyl-L-methionine = N(4)-methylcytidine(1402) in 16S rRNA + S-adenosyl-L-homocysteine + H(+). Functionally, specifically methylates the N4 position of cytidine in position 1402 (C1402) of 16S rRNA. This Exiguobacterium sp. (strain ATCC BAA-1283 / AT1b) protein is Ribosomal RNA small subunit methyltransferase H.